The chain runs to 269 residues: MSKTLLDQIKQANPIITNVANSVTVDQVANVQNIIGASPIMSSDPEEAPEMVAIAQALSINIGTLSTEPIHQMKTLMAEAYRQAKPVVIDPVAVSSIHYRQKIIDELLALGTPQIIRGNAGEIAYLAGLDWQANGIDAGSGEIDLVKVAQTAAKKQQTTILLSGPTDIITDGHHTTKVANGTPLFQVHVGSGDMLTGLCAAFVAVSPDNPYQAAIDAATTFAVAGQLVAEAMPTPLPGSFYPQLLDCLFNITAADVQTHAQVTEVLTHE.

Substrate is bound at residue M41. ATP-binding residues include R117 and S163. Residue G190 participates in substrate binding.

This sequence belongs to the Thz kinase family. Mg(2+) is required as a cofactor.

It carries out the reaction 5-(2-hydroxyethyl)-4-methylthiazole + ATP = 4-methyl-5-(2-phosphooxyethyl)-thiazole + ADP + H(+). The protein operates within cofactor biosynthesis; thiamine diphosphate biosynthesis; 4-methyl-5-(2-phosphoethyl)-thiazole from 5-(2-hydroxyethyl)-4-methylthiazole: step 1/1. Catalyzes the phosphorylation of the hydroxyl group of 4-methyl-5-beta-hydroxyethylthiazole (THZ). This Latilactobacillus sakei subsp. sakei (strain 23K) (Lactobacillus sakei subsp. sakei) protein is Hydroxyethylthiazole kinase.